Here is a 1279-residue protein sequence, read N- to C-terminus: MSSTKWTDEQRQAIFTKNCNLLVAAGAGAGKTAVLVQRIIEKILDKEEPIDIDKLLVVTFTNAAAAEMRERIGDAISKGLDEDPESKVLRKQLTLLNKSNIMTIHSFCLQVIKNNFHTIEIDPNFRICDETEGILMKQEAIDELFDELYEIENEDFINLVESYASRKDIRLQGVVLELHRFAKSAPFSYDWLLNMAEEFNVGEEFNFEETPWADMIMEDMKVLLHGFKNMLQKSIDVILNSEGIEYYYEPFKMDLNFINSLLEKLSFKEFRGEIIAYDFPKLPLKRNKDADKEAKERVKKLRDKVKKRIIELRITLNSYENEFTKKEFIFLYPSMKALSNLVILFDKKYEAKKRERDLIDFNDIEHLCLSILTDKDSKGHIIPSDIALDYRKKFAEVLIDEYQDSNLVQEVIMSMVSRVKGYWSFYNGQLMFNEEEINLEEPHIGLDIPNRFMVGDVKQSIYRFRQAKPEIFLDKYNEYSEEEGIKNRKVKLFKNFRSREEVINGVNYLFKQIMSKTIGELDYTEEEALKVGASYGEEVKGEPIELCLMDKKYEISEEVLKEYNVDEEEALDNIQLEGRLVAKKIQKLVGNNLEGGLKVFDKKLGEYRNLQYRDIVILMRATSNWAPVFVEELAKEGIPVFADTNSGYFDTAEIKTMISLLQIIDNPLQDIPLLSVLRSPIASFNDDELIDIRMVNKNIAFYECMEIIYRLYKNEKLDSYYSFYIKDENKINKIIKDMNEKLKNKICSFIEKLKLWREKSINIDIDEFIWFLYMETGYYGYAGALQAGEQRQANLRILFQRAKQYAKTSYKGLFNFINFINKLKFSSGDMGSAKILGENENVIRIMSIHKSKGLEFPVVILSGTGKNFNMTDLNKNILFHRDLGYGPDYVDTERRIAYPSLVKNIIKNKIRLETLSEEMRILYVALTRAREKLIITGLINNMDKAVESWLNLSDDKNKVPEYAVMNGKTYLDWIGPAIIKHKDAVSFREELKMSSELSNIVDDKSKWKIELWNKKELLKEKVEEDEVEISEKIKETLMNLGESNYKEEIYKRLSFKYKYDNASSIPTKLSVSDVKKQFILDEKENTEELFKKVELRKPMFMGEKKKISPSERGTIIHLFMQHLDLKKAENKEDIKEQINRLIEREFITYEQSKVINPYKILKFCRSELGKRMINSNNINREMPFSIEIPAVEIYRELDKNIYKDEKLIIQGIIDCYFEEEEGLVLLDYKTDYVNDIEEIKNRYEIQIKYYEEALNRITGKTVKDKYLYLFSVDNYIKID.

The UvrD-like helicase ATP-binding domain occupies 4 to 499 (TKWTDEQRQA…VKLFKNFRSR (496 aa)). An ATP-binding site is contributed by 25–32 (AGAGAGKT). The UvrD-like helicase C-terminal domain occupies 526 to 853 (EEALKVGASY…RIMSIHKSKG (328 aa)).

Belongs to the helicase family. AddA subfamily. Heterodimer of AddA and AddB/RexB. Mg(2+) is required as a cofactor.

The catalysed reaction is Couples ATP hydrolysis with the unwinding of duplex DNA by translocating in the 3'-5' direction.. It carries out the reaction ATP + H2O = ADP + phosphate + H(+). The heterodimer acts as both an ATP-dependent DNA helicase and an ATP-dependent, dual-direction single-stranded exonuclease. Recognizes the chi site generating a DNA molecule suitable for the initiation of homologous recombination. The AddA nuclease domain is required for chi fragment generation; this subunit has the helicase and 3' -&gt; 5' nuclease activities. The chain is ATP-dependent helicase/nuclease subunit A from Clostridium botulinum (strain 657 / Type Ba4).